A 541-amino-acid chain; its full sequence is Cytochrome P450 67 (541 aa).

A heme-binding site is contributed by Cys479.

This sequence belongs to the cytochrome P450 family. Heme is required as a cofactor.

The protein is Cytochrome P450 67 (CYP67) of Uromyces fabae (Rust fungus).